Reading from the N-terminus, the 209-residue chain is Large ribosomal subunit protein uL4 (209 aa).

The segment at Arg-45–Ser-80 is disordered.

The protein belongs to the universal ribosomal protein uL4 family. As to quaternary structure, part of the 50S ribosomal subunit.

One of the primary rRNA binding proteins, this protein initially binds near the 5'-end of the 23S rRNA. It is important during the early stages of 50S assembly. It makes multiple contacts with different domains of the 23S rRNA in the assembled 50S subunit and ribosome. Functionally, forms part of the polypeptide exit tunnel. The protein is Large ribosomal subunit protein uL4 of Porphyromonas gingivalis (strain ATCC BAA-308 / W83).